Consider the following 189-residue polypeptide: Elongation factor P (189 aa).

The protein belongs to the elongation factor P family.

Its subcellular location is the cytoplasm. The protein operates within protein biosynthesis; polypeptide chain elongation. Its function is as follows. Involved in peptide bond synthesis. Stimulates efficient translation and peptide-bond synthesis on native or reconstituted 70S ribosomes in vitro. Probably functions indirectly by altering the affinity of the ribosome for aminoacyl-tRNA, thus increasing their reactivity as acceptors for peptidyl transferase. The chain is Elongation factor P from Ehrlichia chaffeensis (strain ATCC CRL-10679 / Arkansas).